Reading from the N-terminus, the 345-residue chain is Glycerol-3-phosphate dehydrogenase [NAD(P)+] (345 aa).

Residues Ser-11, Trp-12, His-32, Arg-33, and Lys-106 each contribute to the NADPH site. Sn-glycerol 3-phosphate-binding residues include Lys-106, Gly-137, and Ser-139. Residue Ala-141 coordinates NADPH. Residues Lys-192, Asp-245, Ser-255, Arg-256, and Asn-257 each contribute to the sn-glycerol 3-phosphate site. Lys-192 serves as the catalytic Proton acceptor. Residue Arg-256 participates in NADPH binding. NADPH is bound by residues Val-280 and Glu-282.

It belongs to the NAD-dependent glycerol-3-phosphate dehydrogenase family.

The protein localises to the cytoplasm. It catalyses the reaction sn-glycerol 3-phosphate + NAD(+) = dihydroxyacetone phosphate + NADH + H(+). The catalysed reaction is sn-glycerol 3-phosphate + NADP(+) = dihydroxyacetone phosphate + NADPH + H(+). It functions in the pathway membrane lipid metabolism; glycerophospholipid metabolism. Catalyzes the reduction of the glycolytic intermediate dihydroxyacetone phosphate (DHAP) to sn-glycerol 3-phosphate (G3P), the key precursor for phospholipid synthesis. The polypeptide is Glycerol-3-phosphate dehydrogenase [NAD(P)+] (Bacillus pumilus (strain SAFR-032)).